Consider the following 491-residue polypeptide: Transmembrane protein 39B (491 aa).

Residues 1 to 56 (MAGGRRGANRTTYCRSPLSNDTGSVGNGNHSTSSPVTGVRSRTRNGSGTGMSSPPL) are disordered. N-linked (GlcNAc...) asparagine glycans are attached at residues Asn9, Asn20, Asn29, and Asn45. 2 stretches are compositionally biased toward polar residues: residues 9–36 (NRTTYCRSPLSNDTGSVGNGNHSTSSPV) and 44–56 (RNGSGTGMSSPPL). 8 helical membrane passes run 79–99 (LFELHLFACHLIALFVHYVNI), 115–135 (TSLNFHLIDYNMLVFTVIVLA), 152–172 (LSFPHSVFLVTARFAVLTLAG), 185–205 (TYSVLSLLFLCYPFGMYIPFF), 290–310 (EVLVSSMLSAYYVAFVPVWFV), 322–342 (CELFILVSVSTSVILMRHLLP), 423–443 (ILNILIILEGAMIFYQLYSLM), and 449–469 (HQTISLALILFSNYYAFFKLL).

This sequence belongs to the TMEM39 family. As to expression, expressed in the ovary, followed by the intestine and brain.

It is found in the endoplasmic reticulum membrane. In terms of biological role, may protect the cells against DNA damage caused by exposure to the cold-warming stress and facilitates tissue damage repair during the recovery phase. This Danio rerio (Zebrafish) protein is Transmembrane protein 39B.